The sequence spans 950 residues: Protocadherin alpha-13 (950 aa).

Residues 1–29 (MLSSWQGGPRPRQLLLWLLILAAWETGSG) form the signal peptide. Residues 30–697 (QLHYSVPEEA…GPEAALVDVN (668 aa)) are Extracellular-facing. Cadherin domains lie at 34–133 (SVPE…PPIF), 134–242 (PESK…APEF), 243–350 (YQSV…APEV), 351–455 (TITS…APAF), 456–565 (AQPE…APAL), and 581–678 (MPRS…APQA). Asn-257 and Asn-265 each carry an N-linked (GlcNAc...) asparagine glycan. Asn-548 carries N-linked (GlcNAc...) asparagine glycosylation. A helical membrane pass occupies residues 698 to 718 (VYLIIAICAVSSLLVLTLLLY). At 719-950 (TALRCSAPPT…GNSTTDNSDQ (232 aa)) the chain is on the cytoplasmic side. PXXP repeat units lie at residues 734-737 (PGKP), 774-777 (PSLP), 799-802 (PRQP), 832-835 (PGGP), 873-876 (PGNP), and 891-894 (PGSP). The 6 X 4 AA repeats of P-X-X-P stretch occupies residues 734–894 (PGKPTLVCSS…PDKFIIPGSP (161 aa)). 2 disordered regions span residues 774–808 (PSLP…DWRY) and 827–950 (ILRA…NSDQ). Residues 787-800 (GQREEDSEGLKEPR) are compositionally biased toward basic and acidic residues. The span at 909–923 (DKSDFITFGKKEETK) shows a compositional bias: basic and acidic residues.

It localises to the cell membrane. Its function is as follows. Potential calcium-dependent cell-adhesion protein. May be involved in the establishment and maintenance of specific neuronal connections in the brain. The polypeptide is Protocadherin alpha-13 (PCDHA13) (Pan troglodytes (Chimpanzee)).